A 222-amino-acid polypeptide reads, in one-letter code: LexA repressor (222 aa).

The H-T-H motif DNA-binding region spans 28–48 (IREIGEHMDIRSTNGVNDHLK). Active-site for autocatalytic cleavage activity residues include serine 135 and lysine 172.

Belongs to the peptidase S24 family. As to quaternary structure, homodimer.

It carries out the reaction Hydrolysis of Ala-|-Gly bond in repressor LexA.. Functionally, represses a number of genes involved in the response to DNA damage (SOS response), including recA and lexA. In the presence of single-stranded DNA, RecA interacts with LexA causing an autocatalytic cleavage which disrupts the DNA-binding part of LexA, leading to derepression of the SOS regulon and eventually DNA repair. The protein is LexA repressor of Myxococcus xanthus (strain DK1622).